A 64-amino-acid polypeptide reads, in one-letter code: Small, acid-soluble spore protein D (64 aa).

It belongs to the alpha/beta-type SASP family.

Its function is as follows. SASP are bound to spore DNA. They are double-stranded DNA-binding proteins that cause DNA to change to an a-like conformation. They protect the DNA backbone from chemical and enzymatic cleavage and are thus involved in dormant spore's high resistance to UV light. This Bacillus subtilis (strain 168) protein is Small, acid-soluble spore protein D (sspD).